Reading from the N-terminus, the 221-residue chain is GTP-binding nuclear protein Ran-1 (221 aa).

Residues 10-174 form the Small GTPase Ran-type domain; sequence DYPSFKLVIV…LYLARKLAGD (165 aa). 21–28 contacts GTP; that stretch reads DGGTGKTT. Residues 40–48 are switch-I; sequence KKYEPTIGV. Residues Gly71, 125-128, and 153-155 contribute to the GTP site; these read NKVD and SAK. The switch-II stretch occupies residues 71–87; that stretch reads GQEKFGGLRDGYYIHGQ.

This sequence belongs to the small GTPase superfamily. Ran family. In terms of assembly, found in a nuclear export complex with RanGTP, exportin and pre-miRNA.

It localises to the nucleus. In terms of biological role, GTP-binding protein involved in nucleocytoplasmic transport. Required for the import of protein into the nucleus and also for RNA export. Involved in chromatin condensation and control of cell cycle. The chain is GTP-binding nuclear protein Ran-1 (RAN1) from Oryza sativa subsp. indica (Rice).